A 1463-amino-acid chain; its full sequence is MEDDDVADFFDFSKPFKRTVVSGGYINGAVKPQKLNIQTLPERAHQGTEYAEKFCREEEARLMEGWVDETLNKSTASRLEQVDDMSSVMEEDTQHLQRVRAKELMEPLFSRYNFTVTPNRLTIHQSKQDILKAIRENPVVVLQGMTGCGKTTQVPQYLLEDAYNRKEWCNIVVTQPRKIAASSIARRVAEERNCALGSLVGFKVGLKEMVSEDTRLTYVTTGVLLNKLITSKSISSYTHIILDEVHEREVDMDFLLIIVRRLLATMRNTKIILMSATIESSEFAQYFKIPGPNSLFAPQLAVSNVTQHDVSVYYLEDLEKLRVDFTIKYEQPDVHEKMYFLAAKVAVVCDRFIDEFESASTIDYKPSIIMFLPGINEIERMAEVLRNFLGDSNVNSQEQTKFTILKLHSMLPSEEQALVFTKPSPGYRKVILSTNIAESSITIPDVKFVIDFCLHRVLVADTLNNFTTLRTQWASRNNCIQRAGRCGRVMNGRVYRLVNKHFFEHGMAQSIEPEMVRCPLSNVVLKTKLLDMGPPHTILALAMSPPNLSDVSNTVLQLKELGALLRTAKGVYDLQDGDITYLGNIMSTLPLDIHLAKLVVLGYVFSVLEEAIVIAAGMNVKNIFCQLRTIEALRVKRHFANGSASDGIAILNAYNWWRSIREQGTGGDTTDWCNRYMLDRKSLIEMAELVQEITMRLKTANIRVVSGANNARWTDRERTVVLKVVMAGAFYPNYFIPTCVTDRELSDKMVYTEIGGRDPFSTVFFCGFDHSNYIGPLYRNEIRALLTERKPTSEKHQVKVEFERSTNKIFVQFQYPPDQQSGKSLYEERNSADRVHPGVYEAIKLRQLRHNQSELLVMHHNDAVAYATEHRLGVWRNHEWHPRSVEIPNAHLSVEPPIHWNRVTATVTHVEHPNKFYLRPHDEKNDNIYHDIMEKLNGCDAVLRAFPEGYAFKQRDIVAAPLPNMVTGKMARAKLLQQCLVRGVEHWTVFFMDFGLTAGVSVKSFRQLRGTPLDMFTKFPDRVFLASLAEVQPSAVRSPKDVWMEETIKHFRQLVHGQQFDVEVYSVVNRVTMVVLRHNPDDPIDLTVNRALINSHHAQLSEESYMSKMNHEKRKRVQFEMELDPMYKTQILNDISEQQRFLEDDDVDSLELPRDLLKVRLMLRGPYSPLEVKCSSTVFSGYRKPVIIEKESLNSVLLDTNPQNTHEKLLVAGCVNETSNSRLIARMTTMMPNIPGLPALMTLIFAPTCLVKKDPDETRVVGLLAGLGTDPRTGESMYPEHDMSLAVDIAIDDDDIADINALRYTMDSILHGGHNEQTPMFGEYSIESLMVKVKDYLIKILQRDRPIQDNRSMAHDFSWVKENPSTSTSSQKRLRSTAIDIYTKAIFPLYHNLNLRPMTADRMEFLRQHCKDLHLLTQSRVPLPKGGITCRLCNVTLESDHTLRIHFYSKLHCDLELKINYRR.

A Helicase ATP-binding domain is found at leucine 131–phenylalanine 296. Residue glycine 144–threonine 151 coordinates ATP. The DEAH box motif lies at aspartate 243 to histidine 246. The Helicase C-terminal domain maps to valine 348–aspartate 531. A Tudor domain is found at alanine 951–phenylalanine 1016.

This sequence belongs to the DEAD box helicase family. DEAH subfamily.

The protein localises to the cytoplasm. The enzyme catalyses ATP + H2O = ADP + phosphate + H(+). Its function is as follows. Probable ATP-binding RNA helicase which plays a central role during gametogenesis by repressing transposable elements and preventing their mobilization, which is essential for the germline integrity. Acts via the piRNA metabolic process, which mediates the repression of transposable elements during meiosis by forming complexes composed of piRNAs and Piwi proteins and govern the methylation and subsequent repression of transposons. This is Probable ATP-dependent RNA helicase spindle-E (spn-E) from Anopheles gambiae (African malaria mosquito).